The primary structure comprises 642 residues: MTLEITGSELIKSKLIDAPERCGVYRMFDVNKQVIYVGKAKNLKKRLTNYIKSDLDNKTLRMIANTCFLEYSITNSEVEALLLEAQLIKKFQPKFNILLKDDKSFPFIKLRLDHDFPQLLKYRGKTLNSGKFFGPFASSTEVNTTLTELQKIFKLRSCTDNYFNSRTRPCLQYEIKRCYAPCVGKINKEDYRDLVAQVKDFLQGRTKELQENLSKKMEELSSQMRFEEAAEIRDRIKALSYVQLKAGVSDIVKDADIIAIVEKNGHYCVEVFLYRAGQACGNIPYFPTSTENSTKEEVLEYFLLQFYQKQQVPAEIIINHEINDKENVIEAIKKINNITKLNIIIPISGGKAKLVQNAAINALFSLEQYLKKFAKNQEIMLEIKELFGLSEISERIEIYDNSHIQGKFAVGVMVVAGKAGFDKKEYRVFSLSSRNSSLSSHASPLSSRNLIAGSSSYFLDPVVKPRDDIVGDDYEMLRQVLTRRLTRLKNEPHKLPSLMIIDGGRGHLGVVKEVMDKFEMNIPFVCMSKGVDRNAGLEQFHMTGKEVFTLDKNLPIMKYLQILRDEAHNFAIKNHRLGRSRAIKLSSLDDIEGIGETRKKALLHYFGSYKAVCDATIDELTKVNGINKSLAEMIFRTLHKSL.

Residues Glu20–Ile97 enclose the GIY-YIG domain. Residues Lys207–Val242 enclose the UVR domain.

Belongs to the UvrC family. Interacts with UvrB in an incision complex.

It localises to the cytoplasm. The UvrABC repair system catalyzes the recognition and processing of DNA lesions. UvrC both incises the 5' and 3' sides of the lesion. The N-terminal half is responsible for the 3' incision and the C-terminal half is responsible for the 5' incision. This chain is UvrABC system protein C, found in Rickettsia felis (strain ATCC VR-1525 / URRWXCal2) (Rickettsia azadi).